A 278-amino-acid chain; its full sequence is Ras-related protein Rab-40B (278 aa).

S23, G26, and K27 together coordinate GTP. Positions 41-49 (SPYGHPAGI) are switch-I. D69 contributes to the Mg(2+) binding site. GTP contacts are provided by G72, N126, and R127. The switch-II stretch occupies residues 72–88 (GQGRFCTIFRSYSRGAQ). Residues 175-228 (LLRHGMDRLWRPSKVLSLQDLCCRAVVSCTPVHLVDKLPLPIALRSHLKSFSMA) form the SOCS box domain. Residues 242–278 (SLTTSSTHKRSSLRKVKLVRPPQSPPKNCTRNSCKIS) are disordered. Basic residues predominate over residues 248-259 (THKRSSLRKVKL). Residues 267 to 278 (PKNCTRNSCKIS) are compositionally biased toward polar residues. Residue C270 is the site of S-palmitoyl cysteine attachment. A lipid anchor (S-geranylgeranyl cysteine) is attached at C275.

It belongs to the small GTPase superfamily. Rab family. As to quaternary structure, component of the cullin-5-RING E3 ubiquitin-protein ligase complex (ECS(RAB40B) complex) composed of CUL5, Elongin BC (ELOB and ELOC), RNF7/RBX2 and RAB40B; RAB40B interaction with ECS complex is GTP-independent. Binds (GTP-bound) LIMA1; interaction promotes LIMA1 subcellular localization in lamellipodia during cell migration. Interacts (GTP-bound) with TKS5/SH3PXD2A (via PX domain); interaction promotes invadopodia-mediated extracellular matrix degradation. Mg(2+) serves as cofactor.

The protein resides in the cell membrane. Its subcellular location is the cytoplasm. The protein localises to the cytosol. It is found in the cell projection. It localises to the lamellipodium membrane. The protein resides in the ruffle. It carries out the reaction GTP + H2O = GDP + phosphate + H(+). It functions in the pathway protein modification; protein ubiquitination. Its activity is regulated as follows. Regulated by guanine nucleotide exchange factors (GEFs) which promote the exchange of bound GDP for free GTP. Regulated by GTPase activating proteins (GAPs) which increase the GTP hydrolysis activity. Inhibited by GDP dissociation inhibitors (GDIs). RAB40B small GTPase acts as substrate-recognition components of the ECS(RAB40B) E3 ubiquitin ligase complex which mediates the ubiquitination of target proteins. The Rab40 subfamily belongs to the Rab family that are key regulators of intracellular membrane trafficking, from the formation of transport vesicles to their fusion with membranes. Rabs cycle between an inactive GDP-bound form and an active GTP-bound form that is able to recruit to membranes different sets of downstream effectors directly responsible for vesicle formation, movement, tethering and fusion. As part of the ECS(RAB40B) complex, GTP-bound RAB40B promotes LIMA1/EPLIN ubiquitination and degradation, thereby regulating leading-edge actin dynamics during cell migration. As part of the ECS(RAB40B) complex, GTP-bound RAB40B also ubiquitinates RAP2A GTPase which promotes its localization to lamellipodia and activation to drive cell migration. The ECS(RAB40B) complex does not mediate canonical ubiquitin-dependent degradation of RAP2. RAB40B also binds TKS5/SH3PXD2A effector independently from ECS complex to promote invadopodia-mediated extracellular matrix degradation. The chain is Ras-related protein Rab-40B from Homo sapiens (Human).